Consider the following 123-residue polypeptide: Insulin-like peptide-1 (123 aa).

The first 24 residues, 1–24 (MTTSSYFLLVALGLLLYVCQSSFG), serve as a signal peptide directing secretion. 4 disulfides stabilise this stretch: Cys-29-Cys-106, Cys-41-Cys-109, Cys-53-Cys-122, and Cys-108-Cys-113. The residue at position 34 (Pro-34) is a 4-hydroxyproline; partial. Positions 59 to 102 (EQGGANNARAYTGRTSSLMKRRGFLSLLKKRGKRDEGSLQRSGR) are cleaved as a propeptide — c peptide. Glu-107 carries the post-translational modification 4-carboxyglutamate. Glu-117 bears the 4-carboxyglutamate; partial mark.

It belongs to the insulin family. As to quaternary structure, heterodimer of A and B chains; disulfide-linked. In terms of tissue distribution, expressed by the venom duct.

It localises to the secreted. Its function is as follows. This venom insulin facilitates prey capture by rapidly inducing hypoglycemic shock. Intraperitoneal injection of this peptide into zebrafish lowers blood glucose with the same potency than human insulin. In vivo, when applied to water, this peptide reduces overall locomotor activity of zebrafish larvae, observed as a significant decrease in the percentage of time spent swimming and movement frequency. This is Insulin-like peptide-1 from Conus victoriae (Queen Victoria cone).